Reading from the N-terminus, the 460-residue chain is Bifunctional protein GlmU (460 aa).

Positions 1 to 232 are pyrophosphorylase; it reads MENVAAIILA…SDEIMGVNDR (232 aa). UDP-N-acetyl-alpha-D-glucosamine-binding positions include 9–12, Lys-23, Gln-75, and 80–81; these read LAAG and GT. Asp-105 serves as a coordination point for Mg(2+). 4 residues coordinate UDP-N-acetyl-alpha-D-glucosamine: Gly-142, Glu-157, Asn-172, and Asn-230. Asn-230 contacts Mg(2+). The linker stretch occupies residues 233-253; it reads AQLAQAARILRRRINRDLMLS. The segment at 254–460 is N-acetyltransferase; the sequence is GVSLVDPEQT…GWRIRMKKKT (207 aa). Residues Arg-336 and Lys-354 each contribute to the UDP-N-acetyl-alpha-D-glucosamine site. Residue His-366 is the Proton acceptor of the active site. UDP-N-acetyl-alpha-D-glucosamine-binding residues include Tyr-369 and Asn-380. Residues 389 to 390, Ser-408, Ala-426, and Arg-443 contribute to the acetyl-CoA site; that span reads NY.

The protein in the N-terminal section; belongs to the N-acetylglucosamine-1-phosphate uridyltransferase family. In the C-terminal section; belongs to the transferase hexapeptide repeat family. Homotrimer. It depends on Mg(2+) as a cofactor.

The protein localises to the cytoplasm. The enzyme catalyses alpha-D-glucosamine 1-phosphate + acetyl-CoA = N-acetyl-alpha-D-glucosamine 1-phosphate + CoA + H(+). The catalysed reaction is N-acetyl-alpha-D-glucosamine 1-phosphate + UTP + H(+) = UDP-N-acetyl-alpha-D-glucosamine + diphosphate. Its pathway is nucleotide-sugar biosynthesis; UDP-N-acetyl-alpha-D-glucosamine biosynthesis; N-acetyl-alpha-D-glucosamine 1-phosphate from alpha-D-glucosamine 6-phosphate (route II): step 2/2. It participates in nucleotide-sugar biosynthesis; UDP-N-acetyl-alpha-D-glucosamine biosynthesis; UDP-N-acetyl-alpha-D-glucosamine from N-acetyl-alpha-D-glucosamine 1-phosphate: step 1/1. The protein operates within bacterial outer membrane biogenesis; LPS lipid A biosynthesis. In terms of biological role, catalyzes the last two sequential reactions in the de novo biosynthetic pathway for UDP-N-acetylglucosamine (UDP-GlcNAc). The C-terminal domain catalyzes the transfer of acetyl group from acetyl coenzyme A to glucosamine-1-phosphate (GlcN-1-P) to produce N-acetylglucosamine-1-phosphate (GlcNAc-1-P), which is converted into UDP-GlcNAc by the transfer of uridine 5-monophosphate (from uridine 5-triphosphate), a reaction catalyzed by the N-terminal domain. The chain is Bifunctional protein GlmU from Pelobacter propionicus (strain DSM 2379 / NBRC 103807 / OttBd1).